The following is a 459-amino-acid chain: ERBB receptor feedback inhibitor 1 (459 aa).

Ser2 carries the post-translational modification N-acetylserine. Thr126 and Thr130 each carry phosphothreonine. The interval 227–352 is disordered; the sequence is QNRVVPDPNP…VMPPTQSFAP (126 aa). Phosphoserine is present on residues Ser250 and Ser271. Residues 264 to 273 show a composition bias toward polar residues; the sequence is SSCTHRASPS. The span at 282-291 shows a compositional bias: pro residues; that stretch reads PPRVPIPPRP. Ser300 bears the Phosphoserine mark. The segment covering 310–323 has biased composition (basic and acidic residues); the sequence is DEDRPPKVPPREPL. Positions 324 to 335 are enriched in polar residues; it reads SRSNSRTPSPKS. Residues 332-361 form an interaction with EGFR and ERBB2 and regulation of EGFR activation region; it reads SPKSLPSYLNGVMPPTQSFAPDPKYVSSKA. Position 458 is a phosphoserine (Ser458).

The protein belongs to the MIG6 family. In terms of assembly, interacts with EGFR and ERBB2.

The protein resides in the cytoplasm. The protein localises to the cell membrane. Its subcellular location is the nucleus. Functionally, negative regulator of EGFR signaling in skin morphogenesis. Acts as a negative regulator for several EGFR family members, including ERBB2, ERBB3 and ERBB4. Inhibits EGFR catalytic activity by interfering with its dimerization. Inhibits autophosphorylation of EGFR, ERBB2 and ERBB4. Important for normal keratinocyte proliferation and differentiation. Plays a role in modulating the response to steroid hormones in the uterus. Required for normal response to progesterone in the uterus and for fertility. Mediates epithelial estrogen responses in the uterus by regulating ESR1 levels and activation. Important for regulation of endometrium cell proliferation. Important for normal prenatal and perinatal lung development. The chain is ERBB receptor feedback inhibitor 1 (Errfi1) from Rattus norvegicus (Rat).